A 342-amino-acid chain; its full sequence is MKLTILGAGAWGTALASHAATAAADHDVVLWGRDPAQLAGIAATGVNATYLPGVSLSPRLVCEPDFDRAVDHALTDPEGLLIIGTPVSGLREMTRRLAARRKGPLAMLWLCKGFEAETHAMPHQMVHDELNALGVAPGEIEYGVLTGPSFAKEVAQGLPCALTVAGTAHVLIDRAQAAFHHHAMRIYGSDDLIGVEVGGAVKNVLAIATGASDGLGLGLNARAALITRGLAEMTRLGLALGGRVETFMGLAGMGDLILTATGDLSRNRKVGQQLAGGKTLDQILADLGHVAEGVRCAQAVAALAARVGVEMPITRAVCAVLFEGLPVADAVSQLLQRDARDE.

NADPH contacts are provided by Trp11, Arg33, and Lys112. Positions 112, 147, and 149 each coordinate sn-glycerol 3-phosphate. Ala151 contacts NADPH. Sn-glycerol 3-phosphate contacts are provided by Lys202, Asp255, Ser265, Arg266, and Asn267. The active-site Proton acceptor is the Lys202. Arg266 contributes to the NADPH binding site. NADPH is bound by residues Val290 and Glu292.

Belongs to the NAD-dependent glycerol-3-phosphate dehydrogenase family.

It localises to the cytoplasm. The catalysed reaction is sn-glycerol 3-phosphate + NAD(+) = dihydroxyacetone phosphate + NADH + H(+). The enzyme catalyses sn-glycerol 3-phosphate + NADP(+) = dihydroxyacetone phosphate + NADPH + H(+). Its pathway is membrane lipid metabolism; glycerophospholipid metabolism. Its function is as follows. Catalyzes the reduction of the glycolytic intermediate dihydroxyacetone phosphate (DHAP) to sn-glycerol 3-phosphate (G3P), the key precursor for phospholipid synthesis. This Cupriavidus metallidurans (strain ATCC 43123 / DSM 2839 / NBRC 102507 / CH34) (Ralstonia metallidurans) protein is Glycerol-3-phosphate dehydrogenase [NAD(P)+].